The sequence spans 111 residues: MNAHKERLESNLLELLQEALAGLNDSELNSLSVTKVECSKGKHHALVFVLSSDHKILSKLKKAEGLIRQFVLQASGWFKCPKLSFVSDNSLEKQLRLDAIFNEIAKGRDND.

Belongs to the RbfA family. Monomer. Binds 30S ribosomal subunits, but not 50S ribosomal subunits or 70S ribosomes.

It is found in the cytoplasm. One of several proteins that assist in the late maturation steps of the functional core of the 30S ribosomal subunit. Associates with free 30S ribosomal subunits (but not with 30S subunits that are part of 70S ribosomes or polysomes). Required for efficient processing of 16S rRNA. May interact with the 5'-terminal helix region of 16S rRNA. The sequence is that of Ribosome-binding factor A from Helicobacter pylori (strain HPAG1).